The sequence spans 494 residues: 3-octaprenyl-4-hydroxybenzoate carboxy-lyase (494 aa).

Mn(2+) is bound at residue N172. Prenylated FMN is bound by residues 175 to 177 (IYR), 189 to 191 (RWL), and 194 to 195 (RG). E238 is a binding site for Mn(2+). The active-site Proton donor is the D287.

This sequence belongs to the UbiD family. As to quaternary structure, homohexamer. Requires prenylated FMN as cofactor. The cofactor is Mn(2+).

The protein localises to the cell membrane. It carries out the reaction a 4-hydroxy-3-(all-trans-polyprenyl)benzoate + H(+) = a 2-(all-trans-polyprenyl)phenol + CO2. It functions in the pathway cofactor biosynthesis; ubiquinone biosynthesis. Its function is as follows. Catalyzes the decarboxylation of 3-octaprenyl-4-hydroxy benzoate to 2-octaprenylphenol, an intermediate step in ubiquinone biosynthesis. The sequence is that of 3-octaprenyl-4-hydroxybenzoate carboxy-lyase from Escherichia coli O139:H28 (strain E24377A / ETEC).